An 888-amino-acid polypeptide reads, in one-letter code: DNA mismatch repair protein MutS (888 aa).

The segment at 249 to 271 (IGQRPPLSPPSREASGSTMAIDP) is disordered. Position 638 to 645 (638 to 645 (GPNMAGKS)) interacts with ATP.

This sequence belongs to the DNA mismatch repair MutS family.

Its function is as follows. This protein is involved in the repair of mismatches in DNA. It is possible that it carries out the mismatch recognition step. This protein has a weak ATPase activity. The polypeptide is DNA mismatch repair protein MutS (Nitrobacter winogradskyi (strain ATCC 25391 / DSM 10237 / CIP 104748 / NCIMB 11846 / Nb-255)).